Consider the following 240-residue polypeptide: Ion-translocating oxidoreductase complex subunit E (240 aa).

A run of 5 helical transmembrane segments spans residues 41–61 (LGLG…VSLV), 71–91 (LPAF…LMQA), 95–115 (ELYQ…VILG), 130–150 (SFDG…LGGL), and 184–204 (GFLL…LIAL).

Belongs to the NqrDE/RnfAE family. In terms of assembly, the complex is composed of six subunits: RnfA, RnfB, RnfC, RnfD, RnfE and RnfG.

The protein resides in the cell inner membrane. In terms of biological role, part of a membrane-bound complex that couples electron transfer with translocation of ions across the membrane. This Pseudomonas aeruginosa (strain ATCC 15692 / DSM 22644 / CIP 104116 / JCM 14847 / LMG 12228 / 1C / PRS 101 / PAO1) protein is Ion-translocating oxidoreductase complex subunit E.